Reading from the N-terminus, the 296-residue chain is tRNA dimethylallyltransferase (296 aa).

ATP is bound at residue 2–9; that stretch reads GPTASGKT. 4–9 provides a ligand contact to substrate; that stretch reads TASGKT. Interaction with substrate tRNA stretches follow at residues 27–30, 151–155, and 232–237; these read DSAL, QRLSR, and RCVGYR.

This sequence belongs to the IPP transferase family. Monomer. It depends on Mg(2+) as a cofactor.

It catalyses the reaction adenosine(37) in tRNA + dimethylallyl diphosphate = N(6)-dimethylallyladenosine(37) in tRNA + diphosphate. In terms of biological role, catalyzes the transfer of a dimethylallyl group onto the adenine at position 37 in tRNAs that read codons beginning with uridine, leading to the formation of N6-(dimethylallyl)adenosine (i(6)A). The protein is tRNA dimethylallyltransferase of Shewanella woodyi (strain ATCC 51908 / MS32).